Consider the following 298-residue polypeptide: Glutamyl-Q tRNA(Asp) synthetase (298 aa).

L-glutamate-binding positions include 9–13 and E45; that span reads RFAPS. Positions 12–22 match the 'HIGH' region motif; the sequence is PSPTGLLHAGS. Zn(2+) contacts are provided by C101, C103, Y121, and C125. Positions 179 and 197 each coordinate L-glutamate. The 'KMSKS' region motif lies at 235-239; it reads KLSKQ. An ATP-binding site is contributed by K238.

This sequence belongs to the class-I aminoacyl-tRNA synthetase family. GluQ subfamily. Requires Zn(2+) as cofactor.

In terms of biological role, catalyzes the tRNA-independent activation of glutamate in presence of ATP and the subsequent transfer of glutamate onto a tRNA(Asp). Glutamate is transferred on the 2-amino-5-(4,5-dihydroxy-2-cyclopenten-1-yl) moiety of the queuosine in the wobble position of the QUC anticodon. The sequence is that of Glutamyl-Q tRNA(Asp) synthetase from Chromobacterium violaceum (strain ATCC 12472 / DSM 30191 / JCM 1249 / CCUG 213 / NBRC 12614 / NCIMB 9131 / NCTC 9757 / MK).